The following is a 252-amino-acid chain: Oncostatin-M (252 aa).

A signal peptide spans 1-25; the sequence is MGVLLTQRTLLSLVLALLFPSMASM. 2 disulfides stabilise this stretch: cysteine 31/cysteine 152 and cysteine 74/cysteine 192. A glycan (N-linked (GlcNAc...) asparagine) is linked at asparagine 100. Disordered stretches follow at residues 162-184 and 213-252; these read TAEP…ASDA and GESP…QLPR. The N-linked (GlcNAc...) asparagine glycan is linked to asparagine 217. Positions 218 to 245 are enriched in basic residues; the sequence is RSRRHSPHQALRKGVRRTRPSRKGKRLM. Residues 222 to 252 constitute a propeptide that is removed on maturation; sequence HSPHQALRKGVRRTRPSRKGKRLMTRGQLPR.

Belongs to the LIF/OSM family. Propeptide processing is not important for receptor binding activity but may be important growth-inhibitory activity.

The protein localises to the secreted. In terms of biological role, growth regulator. Inhibits the proliferation of a number of tumor cell lines. Stimulates proliferation of AIDS-KS cells. It regulates cytokine production, including IL-6, G-CSF and GM-CSF from endothelial cells. Uses both type I OSM receptor (heterodimers composed of LIFR and IL6ST) and type II OSM receptor (heterodimers composed of OSMR and IL6ST). Involved in the maturation of fetal hepatocytes, thereby promoting liver development and regeneration. This chain is Oncostatin-M (OSM), found in Homo sapiens (Human).